Reading from the N-terminus, the 462-residue chain is tRNA-2-methylthio-N(6)-dimethylallyladenosine synthase (462 aa).

Positions 18-138 (RKVFVKTYGC…LPNALARVRS (121 aa)) constitute an MTTase N-terminal domain. Residues C27, C63, C101, C179, C183, and C186 each coordinate [4Fe-4S] cluster. The region spanning 165-397 (RKRGVSAFLT…QALLSEQQYA (233 aa)) is the Radical SAM core domain. One can recognise a TRAM domain in the interval 400–462 (DSMIGREMDV…TNSLIAQKLA (63 aa)).

The protein belongs to the methylthiotransferase family. MiaB subfamily. In terms of assembly, monomer. The cofactor is [4Fe-4S] cluster.

Its subcellular location is the cytoplasm. The enzyme catalyses N(6)-dimethylallyladenosine(37) in tRNA + (sulfur carrier)-SH + AH2 + 2 S-adenosyl-L-methionine = 2-methylsulfanyl-N(6)-dimethylallyladenosine(37) in tRNA + (sulfur carrier)-H + 5'-deoxyadenosine + L-methionine + A + S-adenosyl-L-homocysteine + 2 H(+). In terms of biological role, catalyzes the methylthiolation of N6-(dimethylallyl)adenosine (i(6)A), leading to the formation of 2-methylthio-N6-(dimethylallyl)adenosine (ms(2)i(6)A) at position 37 in tRNAs that read codons beginning with uridine. The polypeptide is tRNA-2-methylthio-N(6)-dimethylallyladenosine synthase (Brucella anthropi (strain ATCC 49188 / DSM 6882 / CCUG 24695 / JCM 21032 / LMG 3331 / NBRC 15819 / NCTC 12168 / Alc 37) (Ochrobactrum anthropi)).